The chain runs to 723 residues: Catalase-peroxidase (723 aa).

Positions 98-226 (WHSAGSYRVG…LAAVMMGLIY (129 aa)) form a cross-link, tryptophyl-tyrosyl-methioninium (Trp-Tyr) (with M-252). Catalysis depends on histidine 99, which acts as the Proton acceptor. Residues 226 to 252 (YVNPEGVDGNPDPLKTAKDMRVTFARM) constitute a cross-link (tryptophyl-tyrosyl-methioninium (Tyr-Met) (with W-98)). Histidine 267 contributes to the heme b binding site.

The protein belongs to the peroxidase family. Peroxidase/catalase subfamily. In terms of assembly, homodimer or homotetramer. It depends on heme b as a cofactor. In terms of processing, formation of the three residue Trp-Tyr-Met cross-link is important for the catalase, but not the peroxidase activity of the enzyme.

The enzyme catalyses H2O2 + AH2 = A + 2 H2O. It carries out the reaction 2 H2O2 = O2 + 2 H2O. Its function is as follows. Bifunctional enzyme with both catalase and broad-spectrum peroxidase activity. The polypeptide is Catalase-peroxidase (Vibrio vulnificus (strain YJ016)).